The chain runs to 420 residues: 4-hydroxy-3-methylbut-2-en-1-yl diphosphate synthase (flavodoxin) (420 aa).

Residues Cys-307, Cys-310, Cys-353, and Glu-360 each coordinate [4Fe-4S] cluster.

It belongs to the IspG family. The cofactor is [4Fe-4S] cluster.

It catalyses the reaction (2E)-4-hydroxy-3-methylbut-2-enyl diphosphate + oxidized [flavodoxin] + H2O + 2 H(+) = 2-C-methyl-D-erythritol 2,4-cyclic diphosphate + reduced [flavodoxin]. It functions in the pathway isoprenoid biosynthesis; isopentenyl diphosphate biosynthesis via DXP pathway; isopentenyl diphosphate from 1-deoxy-D-xylulose 5-phosphate: step 5/6. Converts 2C-methyl-D-erythritol 2,4-cyclodiphosphate (ME-2,4cPP) into 1-hydroxy-2-methyl-2-(E)-butenyl 4-diphosphate. This is 4-hydroxy-3-methylbut-2-en-1-yl diphosphate synthase (flavodoxin) from Brucella abortus (strain S19).